A 411-amino-acid chain; its full sequence is Glucose-1-phosphate adenylyltransferase (411 aa).

Residues glycine 164, 179-180, and serine 197 each bind alpha-D-glucose 1-phosphate; that span reads EK.

This sequence belongs to the bacterial/plant glucose-1-phosphate adenylyltransferase family. Homotetramer.

The catalysed reaction is alpha-D-glucose 1-phosphate + ATP + H(+) = ADP-alpha-D-glucose + diphosphate. Its pathway is glycan biosynthesis; glycogen biosynthesis. Involved in the biosynthesis of ADP-glucose, a building block required for the elongation reactions to produce glycogen. Catalyzes the reaction between ATP and alpha-D-glucose 1-phosphate (G1P) to produce pyrophosphate and ADP-Glc. In Corynebacterium kroppenstedtii (strain DSM 44385 / JCM 11950 / CIP 105744 / CCUG 35717), this protein is Glucose-1-phosphate adenylyltransferase.